Reading from the N-terminus, the 197-residue chain is Holliday junction branch migration complex subunit RuvA (197 aa).

The tract at residues Met-1–Arg-63 is domain I. The segment at Ser-64–Val-142 is domain II. Positions Ala-143 to Ser-147 are flexible linker. The tract at residues Ala-148 to Lys-197 is domain III.

Belongs to the RuvA family. In terms of assembly, homotetramer. Forms an RuvA(8)-RuvB(12)-Holliday junction (HJ) complex. HJ DNA is sandwiched between 2 RuvA tetramers; dsDNA enters through RuvA and exits via RuvB. An RuvB hexamer assembles on each DNA strand where it exits the tetramer. Each RuvB hexamer is contacted by two RuvA subunits (via domain III) on 2 adjacent RuvB subunits; this complex drives branch migration. In the full resolvosome a probable DNA-RuvA(4)-RuvB(12)-RuvC(2) complex forms which resolves the HJ.

It is found in the cytoplasm. Its function is as follows. The RuvA-RuvB-RuvC complex processes Holliday junction (HJ) DNA during genetic recombination and DNA repair, while the RuvA-RuvB complex plays an important role in the rescue of blocked DNA replication forks via replication fork reversal (RFR). RuvA specifically binds to HJ cruciform DNA, conferring on it an open structure. The RuvB hexamer acts as an ATP-dependent pump, pulling dsDNA into and through the RuvAB complex. HJ branch migration allows RuvC to scan DNA until it finds its consensus sequence, where it cleaves and resolves the cruciform DNA. The protein is Holliday junction branch migration complex subunit RuvA of Streptococcus pneumoniae serotype 2 (strain D39 / NCTC 7466).